We begin with the raw amino-acid sequence, 446 residues long: Chromosomal replication initiator protein DnaA (446 aa).

The tract at residues 1 to 72 (MENILDLWNQ…ADTIYELTGE (72 aa)) is domain I, interacts with DnaA modulators. Residues 72–109 (EELSVKFVIPQNQDEENFLPKPQVKKAAKEEPSDFPQS) form a domain II region. Residues 110–326 (MLNPKYTFDT…GALIRVVAYS (217 aa)) are domain III, AAA+ region. 4 residues coordinate ATP: Gly-154, Gly-156, Lys-157, and Thr-158. A domain IV, binds dsDNA region spans residues 327–446 (SLINKDINAD…QVKEIKELLK (120 aa)).

It belongs to the DnaA family. In terms of assembly, oligomerizes as a right-handed, spiral filament on DNA at oriC.

The protein localises to the cytoplasm. Its function is as follows. Plays an essential role in the initiation and regulation of chromosomal replication. ATP-DnaA binds to the origin of replication (oriC) to initiate formation of the DNA replication initiation complex once per cell cycle. Binds the DnaA box (a 9 base pair repeat at the origin) and separates the double-stranded (ds)DNA. Forms a right-handed helical filament on oriC DNA; dsDNA binds to the exterior of the filament while single-stranded (ss)DNA is stabiized in the filament's interior. The ATP-DnaA-oriC complex binds and stabilizes one strand of the AT-rich DNA unwinding element (DUE), permitting loading of DNA polymerase. After initiation quickly degrades to an ADP-DnaA complex that is not apt for DNA replication. Binds acidic phospholipids. This chain is Chromosomal replication initiator protein DnaA, found in Bacillus velezensis (strain DSM 23117 / BGSC 10A6 / LMG 26770 / FZB42) (Bacillus amyloliquefaciens subsp. plantarum).